Consider the following 299-residue polypeptide: Protoheme IX farnesyltransferase (299 aa).

The next 9 helical transmembrane spans lie at 26–46 (VNALIVFCAVIGMFLAVPDGL), 53–73 (FAATVGIACVAGAAAAMNCLI), 94–114 (LHSVEVLVFAGVLGGFGLSVL), 121–141 (LTMWLTLATFVGYAVIYTLLL), 149–169 (IVIGGASGAMPPVLGWAAVSG), 175–195 (ALLLFLIIFAWTPPHFWSLAL), 217–239 (YTRLSVLLYTCALFGVTLLPFAI), 243–265 (GWIYLVAAVTLGLRFVHYAWRLL), and 277–297 (FRFSIVYLSLLFAALLADHYL).

It belongs to the UbiA prenyltransferase family. Protoheme IX farnesyltransferase subfamily.

The protein resides in the cell inner membrane. It catalyses the reaction heme b + (2E,6E)-farnesyl diphosphate + H2O = Fe(II)-heme o + diphosphate. The protein operates within porphyrin-containing compound metabolism; heme O biosynthesis; heme O from protoheme: step 1/1. Converts heme B (protoheme IX) to heme O by substitution of the vinyl group on carbon 2 of heme B porphyrin ring with a hydroxyethyl farnesyl side group. This is Protoheme IX farnesyltransferase from Azoarcus sp. (strain BH72).